A 465-amino-acid chain; its full sequence is uncharacterized protein (465 aa).

Disordered regions lie at residues 1-55, 70-164, and 221-313; these read MNSS…SSHQ, DFSE…VEGQ, and TTDN…KQRV. A compositionally biased stretch (basic and acidic residues) spans 40-50; the sequence is ENYKDNSDHSN. Residues 73-82 show a composition bias toward polar residues; the sequence is ESFNDNQNLK. Residues 83–134 are compositionally biased toward low complexity; the sequence is NFNTTDNNFNDDYNNDYDSNNDSNNDSNNDSNNDYDNESNNYFNNDSNNDSN. Basic and acidic residues predominate over residues 141-150; it reads ETTKHKLPIE. Residues 221–235 show a composition bias toward low complexity; sequence TTDNQSNTESSQENN. Composition is skewed to basic and acidic residues over residues 236 to 249 and 259 to 275; these read VIKK…DKQP and IVPK…KSIK. Over residues 288 to 306 the composition is skewed to polar residues; the sequence is IDQSNKLGKSYNTNNNNSK. Positions 390-423 form a coiled coil; the sequence is NKASIAELKKMRLEQRKREIEEKRRQVENKKPDS.

This is an uncharacterized protein from Acanthamoeba polyphaga mimivirus (APMV).